Consider the following 145-residue polypeptide: Putative pre-16S rRNA nuclease (145 aa).

The protein belongs to the YqgF nuclease family.

It is found in the cytoplasm. Its function is as follows. Could be a nuclease involved in processing of the 5'-end of pre-16S rRNA. The polypeptide is Putative pre-16S rRNA nuclease (Thiobacillus denitrificans (strain ATCC 25259 / T1)).